The sequence spans 218 residues: Ras-related protein R-Ras (218 aa).

Positions 1-30 are disordered; that stretch reads MSSGAASGTGRGRPRGGGPGPGDPPPSETH. Gly residues predominate over residues 7–20; that stretch reads SGTGRGRPRGGGPG. 36–44 lines the GTP pocket; the sequence is GGGGVGKSA. The short motif at 58-66 is the Effector region element; sequence YDPTIEDSY. Residues 83 to 87, 142 to 145, and 172 to 174 each bind GTP; these read DTAGQ, NKAD, and SAK. C215 is subject to Cysteine methyl ester. C215 carries S-geranylgeranyl cysteine lipidation. Residues 216–218 constitute a propeptide, removed in mature form; the sequence is VLL.

The protein belongs to the small GTPase superfamily. Ras family. In terms of assembly, interacts with PLCE1. Interacts (active GTP-bound form preferentially) with RGS14. Interacts with OSBPL3. Interacts with ZDHHC19. Post-translationally, S-palmitoylated by ZDHHC19, leading to increased association with membranes and with rafts/caveolae as well as enhanced cell viability.

It localises to the cell membrane. It carries out the reaction GTP + H2O = GDP + phosphate + H(+). Its function is as follows. GTP-binding protein with GTPase activity, likely involved in the regulation of MAPK signaling pathway and thereby controlling multiple cellular processes. Regulates the organization of the actin cytoskeleton. With OSPBL3, modulates integrin beta-1 (ITGB1) activity. The sequence is that of Ras-related protein R-Ras (RRAS) from Homo sapiens (Human).